Reading from the N-terminus, the 363-residue chain is tRNA N6-adenosine threonylcarbamoyltransferase (363 aa).

His117 and His121 together coordinate Fe cation. Residues 139-143 (LVSGG), Asp172, Gly185, and Asn287 each bind substrate. Asp315 provides a ligand contact to Fe cation.

Belongs to the KAE1 / TsaD family. It depends on Fe(2+) as a cofactor.

It is found in the cytoplasm. The enzyme catalyses L-threonylcarbamoyladenylate + adenosine(37) in tRNA = N(6)-L-threonylcarbamoyladenosine(37) in tRNA + AMP + H(+). Its function is as follows. Required for the formation of a threonylcarbamoyl group on adenosine at position 37 (t(6)A37) in tRNAs that read codons beginning with adenine. Is involved in the transfer of the threonylcarbamoyl moiety of threonylcarbamoyl-AMP (TC-AMP) to the N6 group of A37, together with TsaE and TsaB. TsaD likely plays a direct catalytic role in this reaction. The chain is tRNA N6-adenosine threonylcarbamoyltransferase from Cereibacter sphaeroides (strain ATCC 17025 / ATH 2.4.3) (Rhodobacter sphaeroides).